Consider the following 340-residue polypeptide: UPF0284 protein Saci_0020 (340 aa).

This sequence belongs to the UPF0284 family.

In Sulfolobus acidocaldarius (strain ATCC 33909 / DSM 639 / JCM 8929 / NBRC 15157 / NCIMB 11770), this protein is UPF0284 protein Saci_0020.